The primary structure comprises 60 residues: Potassium channel toxin alpha-KTx 29.3 (60 aa).

A signal peptide spans 1–28 (MKSVCGVLIILVVLTTMLSISTFSTVGA). 3 disulfide bridges follow: Cys32/Cys51, Cys40/Cys56, and Cys44/Cys58.

This sequence belongs to the short scorpion toxin superfamily. Potassium channel inhibitor family. Alpha-KTx 29 subfamily. Expressed by the venom gland.

It localises to the secreted. In terms of biological role, weakly inhibits the Kv1.3/KCNA3 channel (1 uM of thetoxin inhibits currents by 13.2%) and Kv7.1/KCNQ1 channel (10 uM of the toxin inhibits currents by 27.7%). The sequence is that of Potassium channel toxin alpha-KTx 29.3 from Lychas mucronatus (Chinese swimming scorpion).